An 89-amino-acid chain; its full sequence is Large ribosomal subunit protein eL34 (89 aa).

The disordered stretch occupies residues 1-29; it reads MSAPRFRNGTFKRTLKRVPGGRKVEHYKK. Residues 13–29 show a composition bias toward basic residues; the sequence is RTLKRVPGGRKVEHYKK.

This sequence belongs to the eukaryotic ribosomal protein eL34 family.

In Methanosphaera stadtmanae (strain ATCC 43021 / DSM 3091 / JCM 11832 / MCB-3), this protein is Large ribosomal subunit protein eL34.